The following is a 260-amino-acid chain: Methylesterase 7 (260 aa).

Ser-84 (acyl-ester intermediate) is an active-site residue. Active-site charge relay system residues include Asp-210 and His-238.

This sequence belongs to the AB hydrolase superfamily. Methylesterase family.

It catalyses the reaction methyl (indol-3-yl)acetate + H2O = (indol-3-yl)acetate + methanol + H(+). The enzyme catalyses methyl salicylate + H2O = salicylate + methanol + H(+). Its pathway is plant hormone biosynthesis. Its activity is regulated as follows. Esterase activity is down-regulated by salicylic acid (SA). Its function is as follows. Methylesterase shown to have carboxylesterase activity, methyl indole-3-acetic acid (MeIAA) esterase activity and methyl salicylate (MeSA) esterase activity in vitro. Required to convert methyl salicylate (MeSA) to salicylic acid (SA) as part of the signal transduction pathways that activate systemic acquired resistance in systemic tissue. MeSA is believed to be an inactive form that needs to be demethylated to exert a biological effect. This Arabidopsis thaliana (Mouse-ear cress) protein is Methylesterase 7.